The sequence spans 579 residues: MRLIYVIAILLVSTCQAGFFSSLVSRFTGGGNSSPSSSSSSSSFSNSRKPSLSDEKARSYLQTFGYVPPSNSLQSRNGMAGDIQSAEQVFKSAIRKFQEFAGIAKTGFLDAATKAKMALSRCGVTDAPLALTSGSSQFKWSKTRLTYSIESWSSDLSKDDVRRAISEAYGLWSKVTPLEFSEVPAGSTSDIKIRFGVRNHNDPWPFDGEGGVLAHATMPESGMFHFDDDENWTYKDARKIHNNEATDLLAVAIHEGGHTLGLEHSRDENAIMAPFYQKTTDSSGNYVYPNLKSDDISAIQAIYGAGSGRSSSGSDFGGSSGGGSRTTARPTTTTRSWFGRFFGDDDDDVRSRTTTRRTTLWPTTQSPFSGDDWGSGSGSSGRGGSSSGSSGGGCPSHIDAYTPSSSFSYAFSGSQVYTISGTKVTKVQSIHDLFPSAPTPVNAALWNPISGSMLLFSSNRVYSYYFSNIRQIFQMDSGFPKTLPSDLGFSVSGALRWINGHQILMSSGDEFAVYDEFWNQVTLKNRISSYFPNLPRGVKGVESPAGSVITAFTSNQVFEYNSRTKSIGRQSGFSSYIAC.

The signal sequence occupies residues 1–17; that stretch reads MRLIYVIAILLVSTCQA. Positions 18 to 129 are cleaved as a propeptide — activation peptide; that stretch reads GFFSSLVSRF…SRCGVTDAPL (112 aa). The interval 32–51 is disordered; the sequence is NSSPSSSSSSSSFSNSRKPS. The span at 33–50 shows a compositional bias: low complexity; it reads SSPSSSSSSSSFSNSRKP. The Cysteine switch motif lies at 120-127; the sequence is SRCGVTDA. 5 residues coordinate Zn(2+): Cys-122, His-200, Asp-202, His-215, and His-225. Asn-231 carries an N-linked (GlcNAc...) asparagine glycan. His-254 provides a ligand contact to Zn(2+). Residue Glu-255 is part of the active site. Positions 258 and 264 each coordinate Zn(2+). The interval 307–394 is disordered; sequence SGRSSSGSDF…SSSGSSGGGC (88 aa). A compositionally biased stretch (gly residues) spans 315–324; it reads DFGGSSGGGS. The segment covering 325-341 has biased composition (low complexity); the sequence is RTTARPTTTTRSWFGRF. Positions 373–394 are enriched in gly residues; that stretch reads WGSGSGSSGRGGSSSGSSGGGC. 2 Hemopexin repeats span residues 395 to 437 and 438 to 490; these read PSHI…FPSA and PTPV…LGFS.

Belongs to the peptidase M10A family. Zn(2+) serves as cofactor.

It is found in the secreted. It localises to the extracellular space. The protein localises to the extracellular matrix. Its activity is regulated as follows. Inhibited by human TIMP1 and TIMP2 and the broad MMP inhibitors BB94 (Batimastat) and CT543. In terms of biological role, metalloproteinase. In Caenorhabditis elegans, this protein is Matrix metalloproteinase-C.